The primary structure comprises 263 residues: Hydroxyacylglutathione hydrolase (263 aa).

7 residues coordinate Zn(2+): His-55, His-57, Asp-59, His-60, His-117, Asp-134, and His-172.

It belongs to the metallo-beta-lactamase superfamily. Glyoxalase II family. In terms of assembly, monomer. Zn(2+) serves as cofactor.

The catalysed reaction is an S-(2-hydroxyacyl)glutathione + H2O = a 2-hydroxy carboxylate + glutathione + H(+). It participates in secondary metabolite metabolism; methylglyoxal degradation; (R)-lactate from methylglyoxal: step 2/2. Thiolesterase that catalyzes the hydrolysis of S-D-lactoyl-glutathione to form glutathione and D-lactic acid. The chain is Hydroxyacylglutathione hydrolase from Shewanella baltica (strain OS195).